Reading from the N-terminus, the 128-residue chain is Gastrotropin (128 aa).

Alanine 2 carries the N-acetylalanine modification.

The protein belongs to the calycin superfamily. Fatty-acid binding protein (FABP) family. In terms of tissue distribution, expressed in ovary granulosa and luteal cells.

The protein resides in the cytoplasm. Its subcellular location is the membrane. Functionally, binds to bile acids and is involved in enterohepatic bile acid metabolism. Required for efficient apical to basolateral transport of conjugated bile acids in ileal enterocytes. Stimulates gastric acid and pepsinogen secretion. The polypeptide is Gastrotropin (Fabp6) (Mus musculus (Mouse)).